We begin with the raw amino-acid sequence, 147 residues long: NADH-quinone oxidoreductase subunit A (147 aa).

The next 3 helical transmembrane spans lie at 16 to 36 (FAIF…GGWF), 68 to 88 (FYLV…LFAW), and 97 to 117 (WVGF…LVYL).

The protein belongs to the complex I subunit 3 family. As to quaternary structure, NDH-1 is composed of 13 different subunits. Subunits NuoA, H, J, K, L, M, N constitute the membrane sector of the complex.

Its subcellular location is the cell inner membrane. The catalysed reaction is a quinone + NADH + 5 H(+)(in) = a quinol + NAD(+) + 4 H(+)(out). Functionally, NDH-1 shuttles electrons from NADH, via FMN and iron-sulfur (Fe-S) centers, to quinones in the respiratory chain. The immediate electron acceptor for the enzyme in this species is believed to be ubiquinone. Couples the redox reaction to proton translocation (for every two electrons transferred, four hydrogen ions are translocated across the cytoplasmic membrane), and thus conserves the redox energy in a proton gradient. The polypeptide is NADH-quinone oxidoreductase subunit A (Salmonella paratyphi A (strain ATCC 9150 / SARB42)).